A 113-amino-acid polypeptide reads, in one-letter code: Large ribosomal subunit protein bL17 (113 aa).

The protein belongs to the bacterial ribosomal protein bL17 family. Part of the 50S ribosomal subunit. Contacts protein L32.

This is Large ribosomal subunit protein bL17 from Clostridium botulinum (strain Loch Maree / Type A3).